The chain runs to 601 residues: Kelch repeat and BTB domain-containing protein 8 (601 aa).

The tract at residues 1 to 25 (MAASADLSKSSPTPNGIPSSDPASD) is disordered. A compositionally biased stretch (polar residues) spans 7–22 (LSKSSPTPNGIPSSDP). Positions 49 to 117 (TDIVVEVDHG…AYTSRVILTE (69 aa)) constitute a BTB domain. The 100-residue stretch at 153–252 (IGVFIFADHY…PLMEDTFIEK (100 aa)) folds into the BACK domain. 5 Kelch repeats span residues 336–390 (DIYI…YCCG), 391–441 (KMYA…EYKE), 443–481 (IYVL…VYKD), 483–532 (IYYI…LFQN), and 542–588 (QVTV…FECA).

It belongs to the KBTBD8 family. As to quaternary structure, component of the BCR(KBTBD8) E3 ubiquitin ligase complex, at least composed of CUL3, KBTBD8 and RBX1.

It is found in the cytoplasm. Its subcellular location is the cytoskeleton. The protein localises to the spindle. It localises to the golgi apparatus. Its function is as follows. Substrate-specific adapter of a BCR (BTB-CUL3-RBX1) E3 ubiquitin ligase complex that acts as a regulator of neural crest specification. The BCR(KBTBD8) complex acts by mediating monoubiquitination of NOLC1 and TCOF1: monoubiquitination promotes the formation of a NOLC1-TCOF1 complex that acts as a platform to connect RNA polymerase I with enzymes responsible for ribosomal processing and modification, leading to remodel the translational program of differentiating cells in favor of neural crest specification. The sequence is that of Kelch repeat and BTB domain-containing protein 8 (KBTBD8) from Homo sapiens (Human).